A 593-amino-acid polypeptide reads, in one-letter code: ABC1 family protein lscO (593 aa).

Disordered stretches follow at residues 1–29 (MDVAFPGMERHDEKNPPGDDGTKPTGGKK) and 441–467 (PYKNPSSSDDESGESWQRTKETPEERK). 2 stretches are compositionally biased toward basic and acidic residues: residues 8-22 (MERHDEKNPPGDDGT) and 457-467 (QRTKETPEERK).

This sequence belongs to the protein kinase superfamily. ADCK protein kinase family.

Functionally, ABC1 family protein; part of the gene cluster that mediates the biosynthesis of the lipopeptide antibiotics leucinostatins that show extensive biological activities, including antimalarial, antiviral, antibacterial, antifungal, and antitumor activities, as well as phytotoxic. The function of lcsO within the leucinostatins biosynthesis has not been identified yet. This chain is ABC1 family protein lscO, found in Purpureocillium lilacinum (Paecilomyces lilacinus).